The chain runs to 444 residues: Serine carboxypeptidase-like 50 (444 aa).

An N-terminal signal peptide occupies residues Met1–Ser22. Cys79 and Cys308 are oxidised to a cystine. Residue Ser170 is part of the active site. Residue Asn263 is glycosylated (N-linked (GlcNAc...) asparagine). Asp345 is a catalytic residue. Asn361 is a glycosylation site (N-linked (GlcNAc...) asparagine). His403 is an active-site residue.

The protein belongs to the peptidase S10 family. In terms of tissue distribution, ubiquitous.

The protein resides in the secreted. Functionally, probable carboxypeptidase. This Arabidopsis thaliana (Mouse-ear cress) protein is Serine carboxypeptidase-like 50 (SCPL50).